Reading from the N-terminus, the 209-residue chain is Octanoyltransferase (209 aa).

The region spanning 29–209 (GSGDELVWML…KKSFVKIFGE (181 aa)) is the BPL/LPL catalytic domain. Substrate contacts are provided by residues 68 to 75 (RGGKYTYH), 141 to 143 (AIG), and 154 to 156 (GIA). Catalysis depends on cysteine 172, which acts as the Acyl-thioester intermediate.

The protein belongs to the LipB family.

It is found in the cytoplasm. The catalysed reaction is octanoyl-[ACP] + L-lysyl-[protein] = N(6)-octanoyl-L-lysyl-[protein] + holo-[ACP] + H(+). It functions in the pathway protein modification; protein lipoylation via endogenous pathway; protein N(6)-(lipoyl)lysine from octanoyl-[acyl-carrier-protein]: step 1/2. Its function is as follows. Catalyzes the transfer of endogenously produced octanoic acid from octanoyl-acyl-carrier-protein onto the lipoyl domains of lipoate-dependent enzymes. Lipoyl-ACP can also act as a substrate although octanoyl-ACP is likely to be the physiological substrate. The chain is Octanoyltransferase from Neorickettsia sennetsu (strain ATCC VR-367 / Miyayama) (Ehrlichia sennetsu).